Consider the following 148-residue polypeptide: UPF0756 membrane protein NMA2160 (148 aa).

Helical transmembrane passes span L13–M35, H50–G70, F80–G100, and V121–L141.

This sequence belongs to the UPF0756 family.

It localises to the cell membrane. This chain is UPF0756 membrane protein NMA2160, found in Neisseria meningitidis serogroup A / serotype 4A (strain DSM 15465 / Z2491).